Reading from the N-terminus, the 258-residue chain is Snake venom serine proteinase 5 (258 aa).

Positions 1 to 18 (MVLIRVLANLLILQLSYA) are cleaved as a signal peptide. A propeptide spanning residues 19 to 24 (QKSSEL) is cleaved from the precursor. Residues 25-249 (VVGGDECNIN…YNDWIQSIIA (225 aa)) enclose the Peptidase S1 domain. 6 disulfides stabilise this stretch: Cys31/Cys163, Cys50/Cys66, Cys98/Cys256, Cys142/Cys210, Cys174/Cys189, and Cys200/Cys225. The N-linked (GlcNAc...) asparagine glycan is linked to Asn44. Residues His65 and Asp110 each act as charge relay system in the active site. The active-site Charge relay system is Ser204.

It belongs to the peptidase S1 family. Snake venom subfamily. As to quaternary structure, monomer. As to expression, expressed by the venom gland.

The protein resides in the secreted. Its function is as follows. Snake venom serine protease that may act in the hemostasis system of the prey. In Crotalus adamanteus (Eastern diamondback rattlesnake), this protein is Snake venom serine proteinase 5.